The primary structure comprises 753 residues: Rsm22-cox11 tandem protein 2, mitochondrial (753 aa).

Residues 1 to 39 (MPILTCRYKILFLYNLRNCFTFQNQRCLIPYGTTTTIRW) constitute a mitochondrion transit peptide. [4Fe-4S] cluster-binding residues include Cys323, Cys329, Cys342, and Cys430. A helical membrane pass occupies residues 571–591 (IYYLVAISIFALGLTYAAVPL). The Mitochondrial intermembrane segment spans residues 592–753 (YRLFCSKTGY…TNGNLLTKLN (162 aa)).

In the N-terminal section; belongs to the methyltransferase superfamily. Rsm22 family. It in the C-terminal section; belongs to the COX11/CtaG family. As to quaternary structure, associates with the mitochondrial ribosome (mitoribosome). Only transiently interacts with the mitoribosome. Post-translationally, specific enzymatic cleavages in vivo by mitochondrial processing peptidase (MPP) yield mature proteins including rsm22-2 and cox11-2.

It localises to the mitochondrion. It is found in the mitochondrion inner membrane. In terms of biological role, mitochondrial ribosome (mitoribosome) assembly factor. Binds at the interface of the head and body domains of the mitochondrial small ribosomal subunit (mt-SSU), occluding the mRNA channel and preventing compaction of the head domain towards the body. Probable inactive methyltransferase: retains the characteristic folding and ability to bind S-adenosyl-L-methionine, but it probably lost its methyltransferase activity. Exerts its effect at some terminal stage of cytochrome c oxidase synthesis, probably by being involved in the insertion of the copper B into subunit I. This chain is Rsm22-cox11 tandem protein 2, mitochondrial (cox1102), found in Schizosaccharomyces pombe (strain 972 / ATCC 24843) (Fission yeast).